Reading from the N-terminus, the 118-residue chain is Phage-like element PBSX protein XkdH (118 aa).

This sequence to B.subtilis YqbH.

In Bacillus subtilis (strain 168), this protein is Phage-like element PBSX protein XkdH (xkdH).